Here is a 604-residue protein sequence, read N- to C-terminus: Testis-expressed protein 13C-1 (604 aa).

Disordered regions lie at residues 314-337 (EGEGPEKPQGTSLHGDSSNNSHKD), 374-397 (PVMPKGISSQGNKTSSTKKKRPKI), 485-523 (CLNAGVSPNEKKMPQGTGKNQSQRQKEEPNSFQANHPRK), and 538-580 (ATKQ…SANC). Polar residues predominate over residues 322–333 (QGTSLHGDSSNN). Positions 544 to 572 (KQPEGIKSLESKQPQETKSSESKQQEKPL) are enriched in basic and acidic residues.

It belongs to the TEX13 family.

Its function is as follows. Plays a role in transcriptional repression. The polypeptide is Testis-expressed protein 13C-1 (Mus musculus (Mouse)).